Here is a 71-residue protein sequence, read N- to C-terminus: UPF0346 protein Sez_1447 (71 aa).

This sequence belongs to the UPF0346 family.

The chain is UPF0346 protein Sez_1447 from Streptococcus equi subsp. zooepidemicus (strain MGCS10565).